A 1230-amino-acid polypeptide reads, in one-letter code: SAM and SH3 domain-containing protein 1 (1230 aa).

Low complexity predominate over residues 1 to 10; that stretch reads MEEDAGAASP. The disordered stretch occupies residues 1-30; that stretch reads MEEDAGAASPAPEPEPEVDPARELEPEAGV. 2 positions are modified to phosphoserine: Ser83 and Ser241. Disordered regions lie at residues 211–249 and 275–337; these read RQSSTLDPADWPDGSYPTLDGSSTCNSREQSDDETEDSV and KKPS…LDTW. Basic and acidic residues predominate over residues 275-297; that stretch reads KKPSAEGGEEHVFENSPVQDERS. The span at 324-336 shows a compositional bias: low complexity; it reads SLTPSPSSSSLDT. Ser400 is subject to Phosphoserine. Disordered regions lie at residues 439–566, 610–633, and 705–792; these read PRIS…YDTD, EEKPKRPTRRRKKGRPSQPKSVED, and VDNQ…KSCD. A compositionally biased stretch (polar residues) spans 461-470; the sequence is KYSSPVSEQD. Basic and acidic residues predominate over residues 485 to 494; sequence PDSEHVDKPK. Residues 498–516 show a composition bias toward low complexity; it reads GGSVESLRSSLSGQSSMSG. Polar residues predominate over residues 517 to 529; the sequence is QTVSTTDSSTSNR. The region spanning 547-608 is the SH3 domain; that stretch reads PFCGRARVHT…KFIYVDVLNE (62 aa). A compositionally biased stretch (basic residues) spans 615–624; the sequence is RPTRRRKKGR. An SAM 1 domain is found at 626 to 690; the sequence is SQPKSVEDLL…LTAVELLQEY (65 aa). A compositionally biased stretch (polar residues) spans 737-758; sequence VLSTKSSTESNLKSFTRSQPGN. Positions 768–779 are enriched in basic and acidic residues; sequence GEVRKQGEEGRL. Phosphoserine occurs at positions 813 and 831. Disordered stretches follow at residues 818 to 875 and 915 to 1045; these read EGPE…LPRG and PPQC…PWLA. Residues 844-852 form a required for interaction with TRAF6 region; it reads NVPTEMPET. Over residues 852–868 the composition is skewed to polar residues; the sequence is TCSQNVPEVPQKTSACT. The span at 940 to 956 shows a compositional bias: basic and acidic residues; that stretch reads GLRKGHDHHPLGTKEGV. Residues 962 to 972 show a composition bias toward polar residues; sequence APETRTQSRHP. Low complexity predominate over residues 1008-1019; sequence SPASPVSPSDCP. Residues 1160 to 1224 form the SAM 2 domain; the sequence is GCVASMSDWL…ITAARLFKLP (65 aa).

In terms of assembly, interacts with GNAS. Interacts with IQGAP1. Interacts with TRAF6 (via C-terminus); the interaction is LPS-dependent. Interacts with MAP3K7, CHUK and IKBKB. As to expression, expressed in the microvascular endothelium of various organs, as well as in parenchymal cells. Expressed in the endothelium but not lymphoid cells of spleen and thymus.

Its subcellular location is the cytoplasm. Its function is as follows. Is a positive regulator of NF-kappa-B signaling downstream of TLR4 activation. It acts as a scaffold molecule to assemble a molecular complex that includes TRAF6, MAP3K7, CHUK and IKBKB, thereby facilitating NF-kappa-B signaling activation. Regulates TRAF6 and MAP3K7 ubiquitination. Involved in the regulation of cell mobility. Regulates lipolysaccharide (LPS)-induced endothelial cell migration. Is involved in the regulation of skin pigmentation through the control of melanocyte migration in the epidermis. In Mus musculus (Mouse), this protein is SAM and SH3 domain-containing protein 1 (Sash1).